Reading from the N-terminus, the 1349-residue chain is MLAVEPTMDGDFPPHELPPPGGGIQLQNRLLHCPWWGSFSPSLYPTFSSENQQFVGSTPFLGGQSCPETSYPTTATVPSFFSKSSDFPQDPSCLEDLSNASVFSSSVDSLSDIPDTPDFLQADSLNEVPTIWDVSTTSTTHDKLFIPSGPFSAPEDPVTSLSSTPLLISYQSHSQPEEEEGEEEEETEELGHAETYADYVPSKSKIGKQHPDRVVETSTLSSVPPPDITYTLALPTSDNSTLSALQLEAITYACQQHEVLLPSGQRAGFLIGDGAGVGKGRTVAGIIVENYLRGRKKALWFSASNDLKYDAERDLRDIEAPGIAVHALSKIKYGDNTTSEGVLFATYSALIGESQAGGQHRTRLRQILQWCGEGFDGVIVFDECHKAKNASSTKMGKAVLDLQSKLPQARVVYASATGASEPRNMIYMSRLGIWGEGTPFRTFEEFLHAIEKRGVGAMEIVAMDMKVSGMYIARQLSFSGVTFRIEEIPLSPAFQQVYNRAARLWAEALSVFQQAADWIGLESRKSLWGQFWSAHQRFFKYLCIAAKVHRLVELAQQELSRDKCVVIGLQSTGEARTREVLDENEGRLDCFVSAAEGVFLSLIQKHFPSTRRRRDRGGGKRKRRPRGRGPKASRLSLEAAGVIRISDGSSTESDAGLDSDFNSSPESLVDDDVVIVDAPTHPTDDRGSLYPLQRDLQGPGVVERVERLKQGLLAKVRALGRELPVNTLDQLIHQLGGPECVAEMTGRKGRVVSRPDGTVVFESRAEQGLSIDHVNLREKQRFMSGEKLVAIISEASSSGVSLQADRRVQNQRRRVHMTLELPWSADRAIQQFGRTHRSNQVSAPEYVFLISELAGERRFASIVAKRLESLGALTHGDRRATESRDLSKYNFENKYGARALSRVLATIMGQTDNRVPLPQGYPGGDTAFFRDMKQGLLSVGIGSRESRSGCLDVEKDCSITKFLNRILGLEVHKQNALFQYFSDTFDHLIEIDKKEGRYDMGILDLAPGINEIHEESQQVFLAPGHPQDGQVVFYKQISVDRGMKWEEALTRSLELKGPYDGFYLSYKVRGSKMSCLLAEQNRGEYFTVYKPNIGRQSQLETLDSLCRKFHRVTVEEAREPWESSYALSLEHCSHTTWNQRCRLTQEGKCCAQGLRLRHHYMLCGALLRVWGRIAAVMADVSSSSYLQIVRLKTKDKKKQVGIKIPEGCVHRVLQELQLMDAEVKRRSTHGLAARPPTPRAITLPCGPGEVLDLTYSPPAEAFPTPPRFAFPSLPPPDPSSLMLGARDPATNPVELAHQSCDINFREVLEDMLRSLRAGPTETPAPLVGVGGGGTERQSVIHFSPPFPNS.

3 disordered regions span residues 170–212 (YQSH…QHPD), 609–633 (STRR…PKAS), and 1319–1349 (PTET…FPNS). Residues 177–188 (EEEEGEEEEETE) are compositionally biased toward acidic residues. The segment covering 609–631 (STRRRRDRGGGKRKRRPRGRGPK) has biased composition (basic residues).

Belongs to the SBNO family. As to quaternary structure, interacts with TAL1; this interaction inhibits TAL1 occupancy of the DCSTAMP promoter, leading to the activation of the DCSTAMP promoter by the transcription factor MITF. As to expression, expressed in the spleen and bone marrow, and to a lesser extent in the kidney, liver, brain, skin, heart and muscle. Expressed predominantly in osteoclasts, and to a lesser extent in T-cells, B-cells and osteoblasts. Expressed in macrophages.

Acts as a transcriptional coregulator, that can have both coactivator and corepressor functions. Inhibits the DCSTAMP-repressive activity of TAL1, hence enhancing the access of the transcription factor MITF to the DC-STAMP promoter in osteoclast. Plays a role in bone homeostasis; required as a positive regulator in TNFSF11//RANKL-mediated osteoclast fusion via a DCSTAMP-dependent pathway. May also be required in the regulation of osteoblast differentiation. Involved in the transcriptional corepression of NF-kappaB in macrophages. Plays a role as a regulator in the pro-inflammatory cascade. This Mus musculus (Mouse) protein is Protein strawberry notch homolog 2 (Sbno2).